We begin with the raw amino-acid sequence, 313 residues long: Porphobilinogen deaminase (313 aa).

Cys-242 carries the post-translational modification S-(dipyrrolylmethanemethyl)cysteine.

This sequence belongs to the HMBS family. In terms of assembly, monomer. Requires dipyrromethane as cofactor.

The catalysed reaction is 4 porphobilinogen + H2O = hydroxymethylbilane + 4 NH4(+). It participates in porphyrin-containing compound metabolism; protoporphyrin-IX biosynthesis; coproporphyrinogen-III from 5-aminolevulinate: step 2/4. Its function is as follows. Tetrapolymerization of the monopyrrole PBG into the hydroxymethylbilane pre-uroporphyrinogen in several discrete steps. The sequence is that of Porphobilinogen deaminase from Pectobacterium carotovorum subsp. carotovorum (strain PC1).